A 486-amino-acid polypeptide reads, in one-letter code: NADH-ubiquinone oxidoreductase chain 4 (486 aa).

The next 13 membrane-spanning stretches (helical) occupy residues His26–Phe46, Gly76–Ile96, Leu113–Leu132, Tyr134–Gly156, Phe165–Ile185, Ile209–Leu231, Pro239–Leu259, Ile271–Ala291, Leu298–Cys318, Ile329–Ile349, Leu372–Phe392, Pro407–Leu427, and Phe452–Tyr472.

It belongs to the complex I subunit 4 family. In terms of assembly, complex I is composed of 37 different subunits.

Its subcellular location is the mitochondrion membrane. The catalysed reaction is a ubiquinone + NADH + 5 H(+)(in) = a ubiquinol + NAD(+) + 4 H(+)(out). Functionally, core subunit of the mitochondrial membrane respiratory chain NADH dehydrogenase (Complex I) that is believed to belong to the minimal assembly required for catalysis. Complex I functions in the transfer of electrons from NADH to the respiratory chain. The immediate electron acceptor for the enzyme is believed to be ubiquinone. The polypeptide is NADH-ubiquinone oxidoreductase chain 4 (ND4) (Yarrowia lipolytica (strain CLIB 122 / E 150) (Yeast)).